A 164-amino-acid polypeptide reads, in one-letter code: Large ribosomal subunit protein uL15 (164 aa).

Residues 1-52 form a disordered region; sequence MSLSKLKAPKGANRERTRVGRGQGSGLGKTAGRGGKGQKARSGNMHFEGFEG. Over residues 21-37 the composition is skewed to gly residues; the sequence is RGQGSGLGKTAGRGGKG.

This sequence belongs to the universal ribosomal protein uL15 family. In terms of assembly, part of the 50S ribosomal subunit.

Binds to the 23S rRNA. The protein is Large ribosomal subunit protein uL15 of Anaeromyxobacter sp. (strain Fw109-5).